The sequence spans 726 residues: Catalase-peroxidase (726 aa).

The disordered stretch occupies residues 1–33; the sequence is MSTSDDIHNTTATGKCPFHQGGHDQSAGGGTTT. Residues 105–226 constitute a cross-link (tryptophyl-tyrosyl-methioninium (Trp-Tyr) (with M-252)); sequence WHGAGTYRSI…LGATEMGLIY (122 aa). His-106 acts as the Proton acceptor in catalysis. The segment at residues 226-252 is a cross-link (tryptophyl-tyrosyl-methioninium (Tyr-Met) (with W-105)); that stretch reads YVNPEGPDHSGEPLSAAAAIRATFGNM. His-267 serves as a coordination point for heme b.

The protein belongs to the peroxidase family. Peroxidase/catalase subfamily. As to quaternary structure, homodimer or homotetramer. It depends on heme b as a cofactor. In terms of processing, formation of the three residue Trp-Tyr-Met cross-link is important for the catalase, but not the peroxidase activity of the enzyme.

The catalysed reaction is H2O2 + AH2 = A + 2 H2O. It carries out the reaction 2 H2O2 = O2 + 2 H2O. Functionally, bifunctional enzyme with both catalase and broad-spectrum peroxidase activity. This is Catalase-peroxidase from Escherichia coli O1:K1 / APEC.